A 588-amino-acid chain; its full sequence is Retrograde regulation protein 2 (588 aa).

This sequence belongs to the GppA/Ppx family.

Required for a novel path of interorganelle communication between mitochondria, peroxisomes and the nucleus, thereby maintaining a functional metabolic interaction between the tricarboxylic acid and glyoxylate cycles. In particular, required for the retrograde expression of the peroxisomal isoform of citrate synthase, CIT2. This chain is Retrograde regulation protein 2 (RTG2), found in Saccharomyces cerevisiae (strain ATCC 204508 / S288c) (Baker's yeast).